The chain runs to 360 residues: uncharacterized protein (360 aa).

Residues 4–235 enclose the ABC transporter domain; the sequence is LSLQHIQKIY…PANMFVAGFI (232 aa). 37–44 is an ATP binding site; the sequence is GPSGCGKS.

This sequence belongs to the ABC transporter superfamily.

This is an uncharacterized protein from Escherichia coli O6:K15:H31 (strain 536 / UPEC).